The primary structure comprises 59 residues: MAVQKSKVTRSRRGQRRSHDALTGPTLSVDKTTGELHRRHHVSADGFYRGRQVITPKGE.

Positions 1-34 (MAVQKSKVTRSRRGQRRSHDALTGPTLSVDKTTG) are disordered. A compositionally biased stretch (basic residues) spans 7–16 (KVTRSRRGQR).

Belongs to the bacterial ribosomal protein bL32 family.

The protein is Large ribosomal subunit protein bL32 of Marinomonas sp. (strain MWYL1).